A 494-amino-acid polypeptide reads, in one-letter code: ATP synthase subunit beta, chloroplastic (494 aa).

ATP is bound at residue 172-179 (GGAGVGKT).

The protein belongs to the ATPase alpha/beta chains family. In terms of assembly, F-type ATPases have 2 components, CF(1) - the catalytic core - and CF(0) - the membrane proton channel. CF(1) has five subunits: alpha(3), beta(3), gamma(1), delta(1), epsilon(1). CF(0) has four main subunits: a(1), b(1), b'(1) and c(9-12).

The protein resides in the plastid. Its subcellular location is the chloroplast thylakoid membrane. It catalyses the reaction ATP + H2O + 4 H(+)(in) = ADP + phosphate + 5 H(+)(out). Its function is as follows. Produces ATP from ADP in the presence of a proton gradient across the membrane. The catalytic sites are hosted primarily by the beta subunits. In Physcomitrium patens (Spreading-leaved earth moss), this protein is ATP synthase subunit beta, chloroplastic.